The primary structure comprises 134 residues: Methylglyoxal synthase (134 aa).

The MGS-like domain maps to 1 to 134 (MHIALIAHDE…DWRDLRRNDE (134 aa)). Substrate contacts are provided by residues histidine 8, lysine 12, 34–37 (TGTT), and 54–55 (SG). Aspartate 60 functions as the Proton donor/acceptor in the catalytic mechanism. Histidine 87 contacts substrate.

This sequence belongs to the methylglyoxal synthase family.

The catalysed reaction is dihydroxyacetone phosphate = methylglyoxal + phosphate. In terms of biological role, catalyzes the formation of methylglyoxal from dihydroxyacetone phosphate. This Listeria innocua serovar 6a (strain ATCC BAA-680 / CLIP 11262) protein is Methylglyoxal synthase.